The following is a 152-amino-acid chain: Arginine repressor (152 aa).

This sequence belongs to the ArgR family.

It is found in the cytoplasm. It functions in the pathway amino-acid biosynthesis; L-arginine biosynthesis [regulation]. Regulates arginine biosynthesis genes. This Lachnoclostridium phytofermentans (strain ATCC 700394 / DSM 18823 / ISDg) (Clostridium phytofermentans) protein is Arginine repressor.